A 743-amino-acid polypeptide reads, in one-letter code: NAD(P)H-quinone oxidoreductase subunit 5, chloroplastic (743 aa).

The next 16 helical transmembrane spans lie at 9–29, 40–60, 89–109, 125–145, 147–167, 185–205, 219–239, 258–278, 280–300, 327–347, 354–374, 396–416, 425–445, 546–566, 607–627, and 721–741; these read WIIP…LLFF, WAFI…DLSI, IDPL…LVLI, FAYM…SNFI, IYIF…FWFT, GDFG…SFEF, NEVN…GPVA, TPIS…FLVA, LLPL…IGII, LGYM…FHLI, ALLF…VGYF, TAFL…CFWS, WLYS…TAFY, ILFV…IGIP, LSVS…KPFY, and FYLL…FFFF.

It belongs to the complex I subunit 5 family. In terms of assembly, NDH is composed of at least 16 different subunits, 5 of which are encoded in the nucleus.

The protein resides in the plastid. It localises to the chloroplast thylakoid membrane. The catalysed reaction is a plastoquinone + NADH + (n+1) H(+)(in) = a plastoquinol + NAD(+) + n H(+)(out). It carries out the reaction a plastoquinone + NADPH + (n+1) H(+)(in) = a plastoquinol + NADP(+) + n H(+)(out). Functionally, NDH shuttles electrons from NAD(P)H:plastoquinone, via FMN and iron-sulfur (Fe-S) centers, to quinones in the photosynthetic chain and possibly in a chloroplast respiratory chain. The immediate electron acceptor for the enzyme in this species is believed to be plastoquinone. Couples the redox reaction to proton translocation, and thus conserves the redox energy in a proton gradient. This Citrus sinensis (Sweet orange) protein is NAD(P)H-quinone oxidoreductase subunit 5, chloroplastic (ndhF).